The following is a 240-amino-acid chain: 7-cyano-7-deazaguanine synthase (240 aa).

Phenylalanine 18 to leucine 28 is an ATP binding site. 4 residues coordinate Zn(2+): cysteine 197, cysteine 206, cysteine 209, and cysteine 212.

Belongs to the QueC family. Zn(2+) is required as a cofactor.

The catalysed reaction is 7-carboxy-7-deazaguanine + NH4(+) + ATP = 7-cyano-7-deazaguanine + ADP + phosphate + H2O + H(+). It participates in purine metabolism; 7-cyano-7-deazaguanine biosynthesis. Functionally, catalyzes the ATP-dependent conversion of 7-carboxy-7-deazaguanine (CDG) to 7-cyano-7-deazaguanine (preQ(0)). The chain is 7-cyano-7-deazaguanine synthase from Shewanella putrefaciens (strain CN-32 / ATCC BAA-453).